Reading from the N-terminus, the 471-residue chain is 3-isopropylmalate dehydratase large subunit (471 aa).

[4Fe-4S] cluster contacts are provided by Cys-347, Cys-407, and Cys-410.

The protein belongs to the aconitase/IPM isomerase family. LeuC type 1 subfamily. As to quaternary structure, heterodimer of LeuC and LeuD. [4Fe-4S] cluster is required as a cofactor.

The enzyme catalyses (2R,3S)-3-isopropylmalate = (2S)-2-isopropylmalate. It participates in amino-acid biosynthesis; L-leucine biosynthesis; L-leucine from 3-methyl-2-oxobutanoate: step 2/4. Catalyzes the isomerization between 2-isopropylmalate and 3-isopropylmalate, via the formation of 2-isopropylmaleate. The chain is 3-isopropylmalate dehydratase large subunit from Buchnera aphidicola subsp. Baizongia pistaciae (strain Bp).